The sequence spans 247 residues: ATP synthase subunit a (247 aa).

The next 6 helical transmembrane spans lie at 24–44, 82–102, 112–132, 141–161, 181–201, and 206–226; these read IAFT…AAMM, FFPL…VGII, IIVT…YGFY, LFVP…IEII, GHVT…LGFV, and ALLP…VAFL.

This sequence belongs to the ATPase A chain family. F-type ATPases have 2 components, CF(1) - the catalytic core - and CF(0) - the membrane proton channel. CF(1) has five subunits: alpha(3), beta(3), gamma(1), delta(1), epsilon(1). CF(0) has four main subunits: a, b, b' and c.

The protein localises to the cell inner membrane. Its function is as follows. Key component of the proton channel; it plays a direct role in the translocation of protons across the membrane. The protein is ATP synthase subunit a of Bradyrhizobium sp. (strain ORS 278).